The primary structure comprises 247 residues: MATRLQYDNNNCEIGVFSKLTNAYCLVSATSASANFFTGYESKLKGVIPIVTTSIGGSGTIGSLCVGNKNGLLLSHTITDQELQHLRDSLPDEVVVQRIEEPICALGNAIACNDYVALVHPKLEKDTEEIISDVLGVEVYRQTIANNELVGSYCSLSNNGGMVHSNTNVEEMVELANLVQVPLVAGTVNRGSQVISAGLTVNDWTAFCGSDTTAVELSVVNNIFKLVQSQPDFVGSEMRKSLIDTYV.

Belongs to the eIF-6 family. In terms of assembly, monomer. Associates with the 60S ribosomal subunit.

The protein resides in the cytoplasm. It localises to the nucleus. Its subcellular location is the nucleolus. In terms of biological role, binds to the 60S ribosomal subunit and prevents its association with the 40S ribosomal subunit to form the 80S initiation complex in the cytoplasm. May also be involved in ribosome biogenesis. The polypeptide is Eukaryotic translation initiation factor 6-1 (Arabidopsis thaliana (Mouse-ear cress)).